Reading from the N-terminus, the 332-residue chain is Protoheme IX farnesyltransferase (332 aa).

A run of 7 helical transmembrane segments spans residues 63–83 (LICT…LNCL), 109–129 (TVFL…ISGV), 132–152 (LAAG…TIIL), 160–180 (IVFG…AATG), 188–208 (WLFS…AILL), 245–265 (ILGV…LLPF), and 286–306 (AKGL…LLLI).

It belongs to the UbiA prenyltransferase family. Protoheme IX farnesyltransferase subfamily.

Its subcellular location is the cell inner membrane. The enzyme catalyses heme b + (2E,6E)-farnesyl diphosphate + H2O = Fe(II)-heme o + diphosphate. It participates in porphyrin-containing compound metabolism; heme O biosynthesis; heme O from protoheme: step 1/1. Converts heme B (protoheme IX) to heme O by substitution of the vinyl group on carbon 2 of heme B porphyrin ring with a hydroxyethyl farnesyl side group. In Prochlorococcus marinus subsp. pastoris (strain CCMP1986 / NIES-2087 / MED4), this protein is Protoheme IX farnesyltransferase.